A 523-amino-acid chain; its full sequence is Aldehyde oxidase GLOX (523 aa).

A signal peptide spans 1 to 19 (MILDAAIVALADLPGTWEL).

The protein localises to the secreted. It is found in the cell wall. It carries out the reaction an aldehyde + O2 + H2O = a carboxylate + H2O2 + H(+). Functionally, catalyzes the oxidation of aldehydes to the corresponding carboxylate by coupling the reaction to the reduction of dioxygen to hydrogen peroxide. Substrates include glyoxal and other aldehydes. Involved in disease resistance against the grapevine powdery mildew E.necator. Is sufficient to confer disease resistance to E.necator. Can produce hydrogen peroxide in response to E.necator infection, and this may directly play a role in the defense mechanism during plant-pathogen interactions. The sequence is that of Aldehyde oxidase GLOX from Vitis pseudoreticulata (Chinese wild grapevine).